The following is a 391-amino-acid chain: Cyclin-B1-2 (391 aa).

Belongs to the cyclin family. Cyclin AB subfamily.

This is Cyclin-B1-2 (CYCB1-2) from Oryza sativa subsp. japonica (Rice).